A 62-amino-acid polypeptide reads, in one-letter code: Large ribosomal subunit protein bL28 (62 aa).

Belongs to the bacterial ribosomal protein bL28 family.

In Streptococcus mutans serotype c (strain ATCC 700610 / UA159), this protein is Large ribosomal subunit protein bL28.